A 280-amino-acid polypeptide reads, in one-letter code: 4-diphosphocytidyl-2-C-methyl-D-erythritol kinase (280 aa).

Lysine 8 is a catalytic residue. An ATP-binding site is contributed by 91–101 (PIEAGLAGGSS). Aspartate 133 is a catalytic residue.

It belongs to the GHMP kinase family. IspE subfamily.

It catalyses the reaction 4-CDP-2-C-methyl-D-erythritol + ATP = 4-CDP-2-C-methyl-D-erythritol 2-phosphate + ADP + H(+). It participates in isoprenoid biosynthesis; isopentenyl diphosphate biosynthesis via DXP pathway; isopentenyl diphosphate from 1-deoxy-D-xylulose 5-phosphate: step 3/6. Catalyzes the phosphorylation of the position 2 hydroxy group of 4-diphosphocytidyl-2C-methyl-D-erythritol. The chain is 4-diphosphocytidyl-2-C-methyl-D-erythritol kinase from Clostridium tetani (strain Massachusetts / E88).